The primary structure comprises 455 residues: Ribulose bisphosphate carboxylase large chain (455 aa).

Position 5 is an N6,N6,N6-trimethyllysine (Lys-5). The substrate site is built by Asn-114 and Thr-164. The Proton acceptor role is filled by Lys-166. Lys-168 is a substrate binding site. Residues Lys-192, Asp-194, and Glu-195 each contribute to the Mg(2+) site. At Lys-192 the chain carries N6-carboxylysine. His-285 (proton acceptor) is an active-site residue. 3 residues coordinate substrate: Arg-286, His-318, and Ser-370.

This sequence belongs to the RuBisCO large chain family. Type I subfamily. As to quaternary structure, heterohexadecamer of 8 large chains and 8 small chains; disulfide-linked. The disulfide link is formed within the large subunit homodimers. The cofactor is Mg(2+). In terms of processing, the disulfide bond which can form in the large chain dimeric partners within the hexadecamer appears to be associated with oxidative stress and protein turnover.

The protein resides in the plastid. It is found in the chloroplast. The catalysed reaction is 2 (2R)-3-phosphoglycerate + 2 H(+) = D-ribulose 1,5-bisphosphate + CO2 + H2O. It carries out the reaction D-ribulose 1,5-bisphosphate + O2 = 2-phosphoglycolate + (2R)-3-phosphoglycerate + 2 H(+). Its function is as follows. RuBisCO catalyzes two reactions: the carboxylation of D-ribulose 1,5-bisphosphate, the primary event in carbon dioxide fixation, as well as the oxidative fragmentation of the pentose substrate in the photorespiration process. Both reactions occur simultaneously and in competition at the same active site. The polypeptide is Ribulose bisphosphate carboxylase large chain (Lupinus latifolius (Broad-leaved lupine)).